Here is a 320-residue protein sequence, read N- to C-terminus: Cytochrome f (320 aa).

Residues 1-35 (MQIRNTFSSLKGEITRFISVSLMIYIITRASISNA) form the signal peptide. The heme site is built by tyrosine 36, cysteine 56, cysteine 59, and histidine 60. The helical transmembrane segment at 286–306 (VQGLLFFLASVVLAQIFLVLK) threads the bilayer.

It belongs to the cytochrome f family. In terms of assembly, the 4 large subunits of the cytochrome b6-f complex are cytochrome b6, subunit IV (17 kDa polypeptide, petD), cytochrome f and the Rieske protein, while the 4 small subunits are PetG, PetL, PetM and PetN. The complex functions as a dimer. Heme is required as a cofactor.

It localises to the plastid. Its subcellular location is the chloroplast thylakoid membrane. Functionally, component of the cytochrome b6-f complex, which mediates electron transfer between photosystem II (PSII) and photosystem I (PSI), cyclic electron flow around PSI, and state transitions. This chain is Cytochrome f, found in Citrus sinensis (Sweet orange).